The primary structure comprises 277 residues: MRLRFTKMHGLGNDFVMIDAISQRVTITPERARQLADRHFGVGCDQVLVVETPDSPDADFKYRIFNHDGSEVENCGNGARCFAVFVRQRGLTAKSVITVETAVGRMVLHVQEDDQVTVDMGAPILSPADIPLAAPQQATSYTLPTQGAGDITIGAVSMGNPHAVYCVNDCKTAPVETLGPEIEAHPHFPKKVNAGFMQVVSPSEINLRVYERGAGETLACGTGACAAVVAGRLQGLLENTVKVNLPGGSLSITWEGVDSPVMMTGPATTVFHGQVKI.

Residues Asn-13, Gln-46, and Asn-66 each contribute to the substrate site. The active-site Proton donor is Cys-75. Substrate is bound by residues Gly-76–Asn-77, Asn-160, Asn-193, and Glu-211–Arg-212. The active-site Proton acceptor is the Cys-220. Gly-221–Thr-222 is a substrate binding site.

The protein belongs to the diaminopimelate epimerase family. As to quaternary structure, homodimer.

Its subcellular location is the cytoplasm. It carries out the reaction (2S,6S)-2,6-diaminopimelate = meso-2,6-diaminopimelate. It functions in the pathway amino-acid biosynthesis; L-lysine biosynthesis via DAP pathway; DL-2,6-diaminopimelate from LL-2,6-diaminopimelate: step 1/1. In terms of biological role, catalyzes the stereoinversion of LL-2,6-diaminopimelate (L,L-DAP) to meso-diaminopimelate (meso-DAP), a precursor of L-lysine and an essential component of the bacterial peptidoglycan. In Saccharophagus degradans (strain 2-40 / ATCC 43961 / DSM 17024), this protein is Diaminopimelate epimerase.